The following is a 64-amino-acid chain: Large ribosomal subunit protein uL30 (64 aa).

The protein belongs to the universal ribosomal protein uL30 family. In terms of assembly, part of the 50S ribosomal subunit.

The chain is Large ribosomal subunit protein uL30 from Rhodopseudomonas palustris (strain HaA2).